The chain runs to 120 residues: Ribonuclease P protein component (120 aa).

This sequence belongs to the RnpA family. As to quaternary structure, consists of a catalytic RNA component (M1 or rnpB) and a protein subunit.

The catalysed reaction is Endonucleolytic cleavage of RNA, removing 5'-extranucleotides from tRNA precursor.. Its function is as follows. RNaseP catalyzes the removal of the 5'-leader sequence from pre-tRNA to produce the mature 5'-terminus. It can also cleave other RNA substrates such as 4.5S RNA. The protein component plays an auxiliary but essential role in vivo by binding to the 5'-leader sequence and broadening the substrate specificity of the ribozyme. In Chlamydia trachomatis serovar L2 (strain ATCC VR-902B / DSM 19102 / 434/Bu), this protein is Ribonuclease P protein component.